The following is a 1173-amino-acid chain: Paired amphipathic helix protein Sin3-like 6 (1173 aa).

Positions asparagine 40–glutamate 75 are disordered. A compositionally biased stretch (basic and acidic residues) spans alanine 55–glutamate 75. 2 consecutive PAH domains span residues leucine 79–glycine 148 and isoleucine 162–cysteine 232. 3 disordered regions span residues alanine 236–tyrosine 337, threonine 655–proline 697, and lysine 740–lysine 813. Basic and acidic residues-rich tracts occupy residues cysteine 264 to arginine 276 and arginine 301 to lysine 319. The span at serine 320 to tyrosine 337 shows a compositional bias: polar residues. Positions proline 750 to asparagine 765 are enriched in polar residues. The segment covering arginine 778–glutamate 810 has biased composition (basic and acidic residues).

The protein resides in the nucleus. Acts as a transcriptional repressor. Plays roles in regulating gene expression and genome stability. The polypeptide is Paired amphipathic helix protein Sin3-like 6 (SNL6) (Arabidopsis thaliana (Mouse-ear cress)).